Consider the following 125-residue polypeptide: UPF0102 protein PBPRA3228 (125 aa).

It belongs to the UPF0102 family.

This chain is UPF0102 protein PBPRA3228, found in Photobacterium profundum (strain SS9).